We begin with the raw amino-acid sequence, 125 residues long: Ribosome-binding factor A (125 aa).

It belongs to the RbfA family. In terms of assembly, monomer. Binds 30S ribosomal subunits, but not 50S ribosomal subunits or 70S ribosomes.

It localises to the cytoplasm. Functionally, one of several proteins that assist in the late maturation steps of the functional core of the 30S ribosomal subunit. Associates with free 30S ribosomal subunits (but not with 30S subunits that are part of 70S ribosomes or polysomes). Required for efficient processing of 16S rRNA. May interact with the 5'-terminal helix region of 16S rRNA. This Wigglesworthia glossinidia brevipalpis protein is Ribosome-binding factor A.